A 135-amino-acid chain; its full sequence is Histone H3 type 2 (135 aa).

Positions 1–40 (MARTKQTARKSTGGKAPRKQLATKAARKTPATGGVKKPHR) are disordered. Lys5 bears the N6-methyllysine mark. At Lys10 the chain carries N6-acetyllysine; alternate. Lys10 carries the post-translational modification N6-methyllysine; alternate. Phosphoserine is present on Ser11. A Phosphothreonine modification is found at Thr12. Lys15, Lys19, and Lys24 each carry N6-acetyllysine. Lys28 bears the N6-acetyllysine; alternate mark. Lys28 is modified (N6-methyllysine; alternate). An N6-methyllysine mark is found at Lys36 and Lys37.

This sequence belongs to the histone H3 family. As to quaternary structure, the nucleosome is a histone octamer containing two molecules each of H2A, H2B, H3 and H4 assembled in one H3-H4 heterotetramer and two H2A-H2B heterodimers. The octamer wraps approximately 147 bp of DNA. Acetylation is generally linked to gene activation. Acetylated to form H3K9ac (11%), H3K14ac (17%), H3K18ac (11%), H3K23ac (16%) and H3K27ac (7%). H3K4, H3K35 and H3K36 are not acetylated. H3K4me prevents acetylation. 32% of the histone H3 are acetylated with, on average, 2.4 acetyl-Lys. They are all continuously deacatylated and re-acetylated with a half-life of approximately 2 minutes. In terms of processing, monomethylated to form H3K4me1 (81%), H3K9me1 (16%), H3K27me1 (25%), H3K35me1 (25%) and H3K36me1 (5%). No methylation at H3K14, H3K18 and H3K23. Methylated by a protein complex that includes Mut11. Set1 methylates specifically H3K4. H3K4me1 is associated with silenced euchromatin. Set3 forms H3K9me1, while H3K9me2 is undetected. H3K9me1 is specifically associated with silent, multi-copy transgenes. Post-translationally, no phosphorylation detected.

The protein localises to the nucleus. Its subcellular location is the chromosome. Its function is as follows. Core component of nucleosome. Nucleosomes wrap and compact DNA into chromatin, limiting DNA accessibility to the cellular machineries which require DNA as a template. Histones thereby play a central role in transcription regulation, DNA repair, DNA replication and chromosomal stability. DNA accessibility is regulated via a complex set of post-translational modifications of histones, also called histone code, and nucleosome remodeling. This is Histone H3 type 2 (ch3-II) from Chlamydomonas reinhardtii (Chlamydomonas smithii).